The chain runs to 433 residues: Vesicle-associated protein (433 aa).

A run of 2 repeats spans residues 112-122 (GGGIGGGLGGG) and 219-229 (GGGIGGGLGGG). Positions 112–350 (GGGIGGGLGG…GGIGGGLGGG (239 aa)) are 3 X 11 AA repeats of G-G-G-I-G-G-G-L-G-G-G. The short motif at 266–274 (VDGKKKGKG) is the Nuclear localization signal element. Copy 3 of the repeat occupies 340-350 (GGGIGGGLGGG). 2 disordered regions span residues 366–389 (RVGGDISGPDLDVSGPDLDIDGDG) and 411–433 (HGKGDIDVDADVDIERPDLNVSG). Over residues 423-433 (DIERPDLNVSG) the composition is skewed to basic and acidic residues.

Egg cortex.

The protein resides in the microsome membrane. It is found in the nucleus. Its subcellular location is the endoplasmic reticulum membrane. Its function is as follows. May function as a multidomain RNA-binding protein. May play a role in nuclear RNA processing and in early development. This is Vesicle-associated protein (VAP-1) from Strongylocentrotus purpuratus (Purple sea urchin).